Reading from the N-terminus, the 162-residue chain is ATP synthase subunit b', chloroplastic (162 aa).

The chain crosses the membrane as a helical span at residues 26–46 (ATLPLQALQFILLTVLLTFIF).

The protein belongs to the ATPase B chain family. F-type ATPases have 2 components, F(1) - the catalytic core - and F(0) - the membrane proton channel. F(1) has five subunits: alpha(3), beta(3), gamma(1), delta(1), epsilon(1). F(0) has four main subunits: a(1), b(1), b'(1) and c(10-14). The alpha and beta chains form an alternating ring which encloses part of the gamma chain. F(1) is attached to F(0) by a central stalk formed by the gamma and epsilon chains, while a peripheral stalk is formed by the delta, b and b' chains.

The protein resides in the plastid. It localises to the chloroplast thylakoid membrane. Functionally, f(1)F(0) ATP synthase produces ATP from ADP in the presence of a proton or sodium gradient. F-type ATPases consist of two structural domains, F(1) containing the extramembraneous catalytic core and F(0) containing the membrane proton channel, linked together by a central stalk and a peripheral stalk. During catalysis, ATP synthesis in the catalytic domain of F(1) is coupled via a rotary mechanism of the central stalk subunits to proton translocation. Its function is as follows. Component of the F(0) channel, it forms part of the peripheral stalk, linking F(1) to F(0). The b'-subunit is a diverged and duplicated form of b found in plants and photosynthetic bacteria. The chain is ATP synthase subunit b', chloroplastic from Emiliania huxleyi (Coccolithophore).